Here is a 652-residue protein sequence, read N- to C-terminus: Acetolactate synthase 3, chloroplastic (652 aa).

The segment covering 1-20 has biased composition (polar residues); the sequence is MAAATSSSPISLTAKPSSKS. The interval 1-23 is disordered; it reads MAAATSSSPISLTAKPSSKSPLP. The N-terminal 69 residues, 1–69, are a transit peptide targeting the chloroplast; sequence MAAATSSSPI…PEKTDKIKTF (69 aa). Glutamate 126 is a binding site for thiamine diphosphate. FAD contacts are provided by residues arginine 228, 334–355, and 377–396; these read HGTVYANYAVEHSDLLLAFGVR and DIDSAEIGKNKTPHVSVCGD. The tract at residues 469–549 is thiamine pyrophosphate binding; it reads QHQMWAAQFY…VKILLLNNQH (81 aa). 2 residues coordinate Mg(2+): aspartate 520 and asparagine 547.

It belongs to the TPP enzyme family. Mg(2+) is required as a cofactor. Requires thiamine diphosphate as cofactor.

It localises to the plastid. It is found in the chloroplast. It carries out the reaction 2 pyruvate + H(+) = (2S)-2-acetolactate + CO2. Its pathway is amino-acid biosynthesis; L-isoleucine biosynthesis; L-isoleucine from 2-oxobutanoate: step 1/4. It functions in the pathway amino-acid biosynthesis; L-valine biosynthesis; L-valine from pyruvate: step 1/4. This is Acetolactate synthase 3, chloroplastic from Brassica napus (Rape).